We begin with the raw amino-acid sequence, 514 residues long: Peptide chain release factor 3 (514 aa).

Residues 8–268 (KKRRTFAIIS…TFLEFAPEPH (261 aa)) enclose the tr-type G domain. Residues 17 to 24 (SHPDAGKT), 85 to 89 (DTPGH), and 139 to 142 (NKLD) contribute to the GTP site.

It belongs to the TRAFAC class translation factor GTPase superfamily. Classic translation factor GTPase family. PrfC subfamily.

It localises to the cytoplasm. Functionally, increases the formation of ribosomal termination complexes and stimulates activities of RF-1 and RF-2. It binds guanine nucleotides and has strong preference for UGA stop codons. It may interact directly with the ribosome. The stimulation of RF-1 and RF-2 is significantly reduced by GTP and GDP, but not by GMP. This chain is Peptide chain release factor 3, found in Streptococcus pyogenes serotype M18 (strain MGAS8232).